The following is a 148-amino-acid chain: Lysozyme C (148 aa).

Positions M1–G18 are cleaved as a signal peptide. Residues K19–V148 form the C-type lysozyme domain. 4 cysteine pairs are disulfide-bonded: C24–C146, C48–C134, C83–C99, and C95–C113. Catalysis depends on residues E53 and D71.

It belongs to the glycosyl hydrolase 22 family. In terms of assembly, monomer.

It localises to the secreted. It catalyses the reaction Hydrolysis of (1-&gt;4)-beta-linkages between N-acetylmuramic acid and N-acetyl-D-glucosamine residues in a peptidoglycan and between N-acetyl-D-glucosamine residues in chitodextrins.. Functionally, lysozymes have primarily a bacteriolytic function; those in tissues and body fluids are associated with the monocyte-macrophage system and enhance the activity of immunoagents. The protein is Lysozyme C (LYZ) of Saimiri sciureus (Common squirrel monkey).